The following is a 240-amino-acid chain: Pyridoxine 5'-phosphate synthase (240 aa).

3-amino-2-oxopropyl phosphate is bound at residue asparagine 6. 8–9 provides a ligand contact to 1-deoxy-D-xylulose 5-phosphate; that stretch reads DH. Arginine 17 is a 3-amino-2-oxopropyl phosphate binding site. The active-site Proton acceptor is the histidine 42. 1-deoxy-D-xylulose 5-phosphate-binding residues include arginine 44 and histidine 49. The active-site Proton acceptor is glutamate 69. Position 99 (threonine 99) interacts with 1-deoxy-D-xylulose 5-phosphate. Histidine 193 functions as the Proton donor in the catalytic mechanism. 3-amino-2-oxopropyl phosphate-binding positions include glycine 194 and 216–217; that span reads GH.

The protein belongs to the PNP synthase family. As to quaternary structure, homooctamer; tetramer of dimers.

The protein localises to the cytoplasm. The catalysed reaction is 3-amino-2-oxopropyl phosphate + 1-deoxy-D-xylulose 5-phosphate = pyridoxine 5'-phosphate + phosphate + 2 H2O + H(+). It functions in the pathway cofactor biosynthesis; pyridoxine 5'-phosphate biosynthesis; pyridoxine 5'-phosphate from D-erythrose 4-phosphate: step 5/5. In terms of biological role, catalyzes the complicated ring closure reaction between the two acyclic compounds 1-deoxy-D-xylulose-5-phosphate (DXP) and 3-amino-2-oxopropyl phosphate (1-amino-acetone-3-phosphate or AAP) to form pyridoxine 5'-phosphate (PNP) and inorganic phosphate. The protein is Pyridoxine 5'-phosphate synthase of Hydrogenobaculum sp. (strain Y04AAS1).